The chain runs to 614 residues: Adenylate kinase 7 (614 aa).

Positions 258–503 (PIKICILGPP…KEIGKPRNYG (246 aa)) are adenylate kinase. Residue 268 to 273 (AVGKSS) coordinates ATP. The interval 288 to 346 (KMKDVIAEAIAKLEAIVAPKDSVEGEEEGEEEEEEENVDDAQELLDGIKESMEQNAGRL) is NMP. The interval 308–327 (DSVEGEEEGEEEEEEENVDD) is disordered. Residues 311 to 327 (EGEEEGEEEEEEENVDD) are compositionally biased toward acidic residues. Residues 323–346 (ENVDDAQELLDGIKESMEQNAGRL), 373–376 (GFPK), and Q380 contribute to the AMP site. Positions 376-568 (KTYDQAKDLF…EERELLEVQS (193 aa)) form a coiled coil. Residues 428–438 (NLPESVVAGTH) are LID. R446 is an AMP binding site. G478 is an ATP binding site. A DPY-30 region spans residues 570–614 (PLRNYLMTYVMPTLMQGLNECCKVRPEDPVDFLAEYLFKNNPEMQ).

In the central section; belongs to the adenylate kinase family. It in the C-terminal section; belongs to the dpy-30 family.

It localises to the cytoplasm. It is found in the cytosol. The protein localises to the cell projection. Its subcellular location is the cilium. The protein resides in the flagellum. The catalysed reaction is AMP + ATP = 2 ADP. The enzyme catalyses a 2'-deoxyribonucleoside 5'-diphosphate + ATP = a 2'-deoxyribonucleoside 5'-triphosphate + ADP. It catalyses the reaction a ribonucleoside 5'-diphosphate + ATP = a ribonucleoside 5'-triphosphate + ADP. In terms of biological role, nucleoside monophosphate (NMP) kinase that catalyzes the reversible transfer of the terminal phosphate group between nucleoside triphosphates and monophosphates. Has highest activity toward AMP, and weaker activity toward dAMP, CMP and dCMP. Also displays broad nucleoside diphosphate kinase activity. Involved in maintaining ciliary structure and function. The sequence is that of Adenylate kinase 7 (Ak7) from Mus musculus (Mouse).